The sequence spans 455 residues: Bifunctional protein GlmU (455 aa).

The pyrophosphorylase stretch occupies residues 1-229 (MSKKVMSVVI…LNEIEGINDG (229 aa)). Residues 11–14 (LAAG), lysine 25, glutamine 76, 81–82 (GT), 103–105 (YGD), glycine 140, glutamate 154, asparagine 169, and asparagine 227 contribute to the UDP-N-acetyl-alpha-D-glucosamine site. Position 105 (aspartate 105) interacts with Mg(2+). Asparagine 227 contributes to the Mg(2+) binding site. The interval 230-250 (LQLARLERLFQKQQAEKLLLS) is linker. Residues 251-455 (GVRILDPARF…IQGWKRPKKT (205 aa)) are N-acetyltransferase. UDP-N-acetyl-alpha-D-glucosamine-binding residues include arginine 333 and lysine 351. The active-site Proton acceptor is the histidine 363. 2 residues coordinate UDP-N-acetyl-alpha-D-glucosamine: tyrosine 366 and asparagine 377. Acetyl-CoA contacts are provided by residues alanine 380, 386–387 (NY), serine 405, alanine 423, and arginine 440.

The protein in the N-terminal section; belongs to the N-acetylglucosamine-1-phosphate uridyltransferase family. This sequence in the C-terminal section; belongs to the transferase hexapeptide repeat family. As to quaternary structure, homotrimer. It depends on Mg(2+) as a cofactor.

The protein resides in the cytoplasm. It catalyses the reaction alpha-D-glucosamine 1-phosphate + acetyl-CoA = N-acetyl-alpha-D-glucosamine 1-phosphate + CoA + H(+). It carries out the reaction N-acetyl-alpha-D-glucosamine 1-phosphate + UTP + H(+) = UDP-N-acetyl-alpha-D-glucosamine + diphosphate. It participates in nucleotide-sugar biosynthesis; UDP-N-acetyl-alpha-D-glucosamine biosynthesis; N-acetyl-alpha-D-glucosamine 1-phosphate from alpha-D-glucosamine 6-phosphate (route II): step 2/2. It functions in the pathway nucleotide-sugar biosynthesis; UDP-N-acetyl-alpha-D-glucosamine biosynthesis; UDP-N-acetyl-alpha-D-glucosamine from N-acetyl-alpha-D-glucosamine 1-phosphate: step 1/1. The protein operates within bacterial outer membrane biogenesis; LPS lipid A biosynthesis. Functionally, catalyzes the last two sequential reactions in the de novo biosynthetic pathway for UDP-N-acetylglucosamine (UDP-GlcNAc). The C-terminal domain catalyzes the transfer of acetyl group from acetyl coenzyme A to glucosamine-1-phosphate (GlcN-1-P) to produce N-acetylglucosamine-1-phosphate (GlcNAc-1-P), which is converted into UDP-GlcNAc by the transfer of uridine 5-monophosphate (from uridine 5-triphosphate), a reaction catalyzed by the N-terminal domain. The chain is Bifunctional protein GlmU from Hamiltonella defensa subsp. Acyrthosiphon pisum (strain 5AT).